Here is a 474-residue protein sequence, read N- to C-terminus: UDP-N-acetylmuramoyl-L-alanyl-D-glutamate--2,6-diaminopimelate ligase (474 aa).

S21 serves as a coordination point for UDP-N-acetyl-alpha-D-muramoyl-L-alanyl-D-glutamate. 93–99 provides a ligand contact to ATP; sequence GTNGKSS. Residues 139 to 140, S166, Q172, and R174 each bind UDP-N-acetyl-alpha-D-muramoyl-L-alanyl-D-glutamate; that span reads TT. K206 bears the N6-carboxylysine mark. Meso-2,6-diaminopimelate is bound by residues R367, 391 to 394, G441, and E445; that span reads DNPR. Positions 391–394 match the Meso-diaminopimelate recognition motif motif; the sequence is DNPR.

Belongs to the MurCDEF family. MurE subfamily. Requires Mg(2+) as cofactor. Carboxylation is probably crucial for Mg(2+) binding and, consequently, for the gamma-phosphate positioning of ATP.

Its subcellular location is the cytoplasm. The enzyme catalyses UDP-N-acetyl-alpha-D-muramoyl-L-alanyl-D-glutamate + meso-2,6-diaminopimelate + ATP = UDP-N-acetyl-alpha-D-muramoyl-L-alanyl-gamma-D-glutamyl-meso-2,6-diaminopimelate + ADP + phosphate + H(+). Its pathway is cell wall biogenesis; peptidoglycan biosynthesis. In terms of biological role, catalyzes the addition of meso-diaminopimelic acid to the nucleotide precursor UDP-N-acetylmuramoyl-L-alanyl-D-glutamate (UMAG) in the biosynthesis of bacterial cell-wall peptidoglycan. The sequence is that of UDP-N-acetylmuramoyl-L-alanyl-D-glutamate--2,6-diaminopimelate ligase from Rickettsia bellii (strain RML369-C).